The chain runs to 303 residues: MKKIVELKNPLRDGEILSVSNLSCFFNEKTVHEVKVIDNFSYTFAKNKVYCIIGDSGSGKSTLVNHFNGLIKPAYGDIWVKDIYIGQKQRKIKDFKRLRKTISIVFQFPEYQLFKDTVEKDIMFGPIALGQSKNEARQKAAYYLEKMGLKYTFLERNPFELSGGQKRRVAIAGILAIEPEVLIFDEPTAGLDPEGEREMMRLIKDAKASGRTVFMITHQMENVLEVADEVLVLSKGQLVKSGDPYEVFMDEAFLAHTTIIMPPVIQVIKDLINLNPKFSCLLDFKPRNLDQLADAINNTIAHG.

An ABC transporter domain is found at 17 to 260 (LSVSNLSCFF…EAFLAHTTII (244 aa)). An ATP-binding site is contributed by 54–61 (GDSGSGKS).

This sequence belongs to the ABC transporter superfamily. Energy-coupling factor EcfA family. As to quaternary structure, forms a stable energy-coupling factor (ECF) transporter complex composed of 2 membrane-embedded substrate-binding proteins (S component), 2 ATP-binding proteins (A component) and 2 transmembrane proteins (T component).

Its subcellular location is the cell membrane. Its function is as follows. ATP-binding (A) component of a common energy-coupling factor (ECF) ABC-transporter complex. Unlike classic ABC transporters this ECF transporter provides the energy necessary to transport a number of different substrates. The protein is Energy-coupling factor transporter ATP-binding protein EcfA2 of Mycoplasma pneumoniae (strain ATCC 29342 / M129 / Subtype 1) (Mycoplasmoides pneumoniae).